The primary structure comprises 420 residues: UDP-N-acetylglucosamine 1-carboxyvinyltransferase (420 aa).

Residue 22 to 23 (KN) coordinates phosphoenolpyruvate. Arginine 93 is a binding site for UDP-N-acetyl-alpha-D-glucosamine. The active-site Proton donor is cysteine 117. Cysteine 117 bears the 2-(S-cysteinyl)pyruvic acid O-phosphothioketal mark. UDP-N-acetyl-alpha-D-glucosamine-binding positions include 122-126 (RPVDL), aspartate 307, and valine 329.

It belongs to the EPSP synthase family. MurA subfamily.

Its subcellular location is the cytoplasm. It catalyses the reaction phosphoenolpyruvate + UDP-N-acetyl-alpha-D-glucosamine = UDP-N-acetyl-3-O-(1-carboxyvinyl)-alpha-D-glucosamine + phosphate. Its pathway is cell wall biogenesis; peptidoglycan biosynthesis. Cell wall formation. Adds enolpyruvyl to UDP-N-acetylglucosamine. The polypeptide is UDP-N-acetylglucosamine 1-carboxyvinyltransferase (Hahella chejuensis (strain KCTC 2396)).